Consider the following 511-residue polypeptide: Adenosine deaminase 2 (511 aa).

A signal peptide spans 1–29 (MLVDGPSERPALCFLLLAVAMSFFGSALS). Positions 30-100 (IDETRAHLLL…HLIERSQVFN (71 aa)) are dimerization. Positions 112 and 114 each coordinate Zn(2+). Aspartate 115 lines the substrate pocket. Asparagine 127 carries N-linked (GlcNAc...) asparagine glycosylation. The interval 127–185 (NVTYRPHCHICFTPRGIMQFRFAHPTPRPSEKCSKWILLEDYRKRVQNVTEFDDSLLRN) is PRB domain. A disulfide bond links cysteine 137 and cysteine 159. N-linked (GlcNAc...) asparagine glycans are attached at residues asparagine 174 and asparagine 185. Substrate contacts are provided by residues 204-211 (WSKFETIF), histidine 293, and glycine 326. Histidine 356 provides a ligand contact to Zn(2+). The active-site Proton donor is the glutamate 359. Asparagine 378 carries an N-linked (GlcNAc...) asparagine glycan. The active-site Proton acceptor is histidine 384. Aspartate 441 contributes to the Zn(2+) binding site. Residue aspartate 442 coordinates substrate.

Belongs to the metallo-dependent hydrolases superfamily. Adenosine and AMP deaminases family. ADGF subfamily. As to quaternary structure, homodimer. Interacts with adenosine receptors. Binds heparin. The cofactor is Zn(2+). As to expression, detected in blood plasma (at protein level). Widely expressed, with most abundant expression in human adult heart, lung, lymphoblasts, and placenta as well as fetal lung, liver, and kidney. In embryo, expressed in the outflow tract and atrium of the developing heart, the VII/VIII cranial nerve ganglion, and the notochord.

It localises to the secreted. The catalysed reaction is adenosine + H2O + H(+) = inosine + NH4(+). Adenosine deaminase that may contribute to the degradation of extracellular adenosine, a signaling molecule that controls a variety of cellular responses. Requires elevated adenosine levels for optimal enzyme activity. Binds to cell surfaces via proteoglycans and may play a role in the regulation of cell proliferation and differentiation, independently of its enzyme activity. The sequence is that of Adenosine deaminase 2 from Homo sapiens (Human).